Reading from the N-terminus, the 183-residue chain is Ribosome-recycling factor (183 aa).

Belongs to the RRF family.

The protein resides in the cytoplasm. In terms of biological role, responsible for the release of ribosomes from messenger RNA at the termination of protein biosynthesis. May increase the efficiency of translation by recycling ribosomes from one round of translation to another. The protein is Ribosome-recycling factor of Deinococcus deserti (strain DSM 17065 / CIP 109153 / LMG 22923 / VCD115).